A 305-amino-acid polypeptide reads, in one-letter code: tRNA pseudouridine synthase B (305 aa).

Catalysis depends on Asp-48, which acts as the Nucleophile.

Belongs to the pseudouridine synthase TruB family. Type 1 subfamily.

It carries out the reaction uridine(55) in tRNA = pseudouridine(55) in tRNA. Functionally, responsible for synthesis of pseudouridine from uracil-55 in the psi GC loop of transfer RNAs. This chain is tRNA pseudouridine synthase B, found in Stutzerimonas stutzeri (strain A1501) (Pseudomonas stutzeri).